A 264-amino-acid polypeptide reads, in one-letter code: Synaptophysin-like protein 2 (264 aa).

Residues 1 to 33 (MSSTESPSRAADKSPRQQVDRLLEGLRWRRLEE) are Cytoplasmic-facing. One can recognise an MARVEL domain in the interval 30 to 238 (RLEEPLGFIK…NCWFVFKETP (209 aa)). The chain crosses the membrane as a helical span at residues 34-54 (PLGFIKVLQWLFAIFAFGSCG). At 55–116 (SYSGETGAMV…LMGDFSAPAE (62 aa)) the chain is on the vesicular side. A helical transmembrane segment spans residues 117 to 137 (FFVTLGIFSFFYTMAALVVYL). Residues 138 to 150 (RFHKLYTENKRFP) are Cytoplasmic-facing. The helical transmembrane segment at 151–171 (LVDFCVTVSFTFFWLVAAAAW) threads the bilayer. At 172–213 (GKGLTDVKGATRPSSLTAAMSVCHGEEAVCSAGATPSMGLAN) the chain is on the vesicular side. Asn213 is a glycosylation site (N-linked (GlcNAc...) asparagine). The chain crosses the membrane as a helical span at residues 214 to 234 (ISVLFGFINFFLWAGNCWFVF). At 235–264 (KETPWHGQGQDQGQGPSQESAAEQGAVEKQ) the chain is on the cytoplasmic side. The tract at residues 242-264 (QGQDQGQGPSQESAAEQGAVEKQ) is disordered.

Belongs to the synaptophysin/synaptobrevin family. In terms of tissue distribution, skeletal muscle.

It is found in the membrane. Its function is as follows. Involved in communication between the T-tubular and junctional sarcoplasmic reticulum (SR) membranes. In Oryctolagus cuniculus (Rabbit), this protein is Synaptophysin-like protein 2 (SYPL2).